The chain runs to 354 residues: Ion-translocating oxidoreductase complex subunit D (354 aa).

5 helical membrane-spanning segments follow: residues 19-39 (IMLW…YYFG), 40-60 (FGVL…EFLV), 70-89 (FYIS…VAIP), 94-116 (YWII…GGLG), and 123-143 (AMVG…TWLA). Residue T186 is modified to FMN phosphoryl threonine. 5 consecutive transmembrane segments (helical) span residues 215 to 235 (LAGL…LFLV), 242 to 262 (WQIP…SWLF), 266 to 286 (MPSP…FFIA), 300 to 320 (LVFG…GGYP), and 321 to 341 (DGAA…DQYT).

Belongs to the NqrB/RnfD family. As to quaternary structure, the complex is composed of six subunits: RnfA, RnfB, RnfC, RnfD, RnfE and RnfG. FMN is required as a cofactor.

The protein localises to the cell inner membrane. Functionally, part of a membrane-bound complex that couples electron transfer with translocation of ions across the membrane. In Mannheimia succiniciproducens (strain KCTC 0769BP / MBEL55E), this protein is Ion-translocating oxidoreductase complex subunit D.